A 193-amino-acid chain; its full sequence is Potassium-transporting ATPase KdpC subunit (193 aa).

A helical membrane pass occupies residues 7 to 27 (PALVLFALLSALTGLAYPLAV).

Belongs to the KdpC family. The system is composed of three essential subunits: KdpA, KdpB and KdpC.

Its subcellular location is the cell inner membrane. Part of the high-affinity ATP-driven potassium transport (or Kdp) system, which catalyzes the hydrolysis of ATP coupled with the electrogenic transport of potassium into the cytoplasm. This subunit acts as a catalytic chaperone that increases the ATP-binding affinity of the ATP-hydrolyzing subunit KdpB by the formation of a transient KdpB/KdpC/ATP ternary complex. The sequence is that of Potassium-transporting ATPase KdpC subunit from Variovorax paradoxus (strain S110).